A 213-amino-acid polypeptide reads, in one-letter code: Large ribosomal subunit protein bL25 (213 aa).

The protein belongs to the bacterial ribosomal protein bL25 family. CTC subfamily. In terms of assembly, part of the 50S ribosomal subunit; part of the 5S rRNA/L5/L18/L25 subcomplex. Contacts the 5S rRNA. Binds to the 5S rRNA independently of L5 and L18.

In terms of biological role, this is one of the proteins that binds to the 5S RNA in the ribosome where it forms part of the central protuberance. The polypeptide is Large ribosomal subunit protein bL25 (Mesorhizobium japonicum (strain LMG 29417 / CECT 9101 / MAFF 303099) (Mesorhizobium loti (strain MAFF 303099))).